The sequence spans 397 residues: Ubiquitin-like modifier-activating enzyme 5 (397 aa).

ATP is bound by residues Gly-77, Asp-98, Lys-121, Asn-144, and Asn-178. Positions 220 and 223 each coordinate Zn(2+). Cys-244 serves as the catalytic Glycyl thioester intermediate. Zn(2+)-binding residues include Cys-297 and Cys-302.

Belongs to the ubiquitin-activating E1 family. UBA5 subfamily.

E1-like enzyme which activates UFM1. This chain is Ubiquitin-like modifier-activating enzyme 5, found in Culex quinquefasciatus (Southern house mosquito).